Here is a 275-residue protein sequence, read N- to C-terminus: Transcriptional coregulator psa-3 (275 aa).

An MEIS N-terminal domain is found at 91–161 (TDDIKRLFQS…RRTVCHEALV (71 aa)). Residues 239–275 (QLPPNFLKPSNEKSPEKSEEEKSQKPSSSPKSPSLSD) form a disordered region. Basic and acidic residues predominate over residues 248–262 (SNEKSPEKSEEEKSQ). Low complexity predominate over residues 263–275 (KPSSSPKSPSLSD).

In terms of assembly, interacts with homeobox protein ceh-20; the interaction is direct, facilitates nuclear localization of ceh-20 and may stabilize interaction of a ceh-20-nob-1 complex with DNA.

Its subcellular location is the nucleus. Functionally, probable transcription coregulator. Required for asymmetric cell divisions of the T hypodermal cells, and cell fate determination, in concert with homeobox proteins nob-1 and ceh-20. Acts downstream of the Wnt signaling pathway, and of ceh-20 and nob-1. This chain is Transcriptional coregulator psa-3, found in Caenorhabditis elegans.